The primary structure comprises 356 residues: Holliday junction branch migration complex subunit RuvB (356 aa).

Positions 4 to 190 (TDKLAAERII…FGIVARLEFY (187 aa)) are large ATPase domain (RuvB-L). ATP contacts are provided by residues leucine 29, arginine 30, glycine 71, lysine 74, threonine 75, threonine 76, 137–139 (EDY), arginine 180, tyrosine 190, and arginine 227. Residue threonine 75 coordinates Mg(2+). The interval 191 to 261 (DAEQLSRIVR…VADAALAMLD (71 aa)) is small ATPAse domain (RuvB-S). A head domain (RuvB-H) region spans residues 264–356 (PVGFDLMDRK…NLWDTPDAER (93 aa)). DNA is bound by residues arginine 300, arginine 319, and arginine 324.

This sequence belongs to the RuvB family. Homohexamer. Forms an RuvA(8)-RuvB(12)-Holliday junction (HJ) complex. HJ DNA is sandwiched between 2 RuvA tetramers; dsDNA enters through RuvA and exits via RuvB. An RuvB hexamer assembles on each DNA strand where it exits the tetramer. Each RuvB hexamer is contacted by two RuvA subunits (via domain III) on 2 adjacent RuvB subunits; this complex drives branch migration. In the full resolvosome a probable DNA-RuvA(4)-RuvB(12)-RuvC(2) complex forms which resolves the HJ.

It localises to the cytoplasm. The enzyme catalyses ATP + H2O = ADP + phosphate + H(+). Functionally, the RuvA-RuvB-RuvC complex processes Holliday junction (HJ) DNA during genetic recombination and DNA repair, while the RuvA-RuvB complex plays an important role in the rescue of blocked DNA replication forks via replication fork reversal (RFR). RuvA specifically binds to HJ cruciform DNA, conferring on it an open structure. The RuvB hexamer acts as an ATP-dependent pump, pulling dsDNA into and through the RuvAB complex. RuvB forms 2 homohexamers on either side of HJ DNA bound by 1 or 2 RuvA tetramers; 4 subunits per hexamer contact DNA at a time. Coordinated motions by a converter formed by DNA-disengaged RuvB subunits stimulates ATP hydrolysis and nucleotide exchange. Immobilization of the converter enables RuvB to convert the ATP-contained energy into a lever motion, pulling 2 nucleotides of DNA out of the RuvA tetramer per ATP hydrolyzed, thus driving DNA branch migration. The RuvB motors rotate together with the DNA substrate, which together with the progressing nucleotide cycle form the mechanistic basis for DNA recombination by continuous HJ branch migration. Branch migration allows RuvC to scan DNA until it finds its consensus sequence, where it cleaves and resolves cruciform DNA. This Burkholderia thailandensis (strain ATCC 700388 / DSM 13276 / CCUG 48851 / CIP 106301 / E264) protein is Holliday junction branch migration complex subunit RuvB.